Reading from the N-terminus, the 97-residue chain is ORF9b protein (97 aa).

A 9b domain is found at Met8–Lys97. The Nuclear export signal signature appears at Ile45–Ser53.

This sequence belongs to the coronavirus group 2 protein 9b family. Homodimer. Interacts with host TOMM70; the interaction occurs only with monomer.

It is found in the host cytoplasm. The protein localises to the host mitochondrion. Functionally, plays a role in inhibiting the host innate immune response by targeting the mitochondrial-associated innate immune response. Acts by binding to host TOMM70, inhibiting its binding to HSP90AB1 thereby disrupting the interferon activation pathway. The protein is ORF9b protein of Homo sapiens (Human).